The following is a 459-amino-acid chain: MSGSDRGDRLYDVLGVTRDATVQEIKTAYRKLALKHHPDKYVDQDSKEVNEIKFKEITAAYEILSDPEKKSHYDLYGDDNGAASSGGANGFGDEDFMNFFNNFFNNGSHDGNNFPGEYDAYEEGNSTSSKDIDIDISLTLKDLYMGKKLKFDLKRQVICIKCHGSGWKPKRKIHVTHDVECESCAGKGSKERLKRFGPGLVASQWVVCEKCNGKGKYTKRPKNPKNFCPDCAGLGLLSKKEIITVNVAPGHHFNDVITVKGMADEEIDKTTCGDLKFHLTEKQENLEQKQIFLKNFDDGAGEDLYTSITISLSEALTGFEKFLTKTFDDRLLTLSVKPGRVVRPGDTIKIANEGWPILDNPHGRCGDLYVFVHIEFPPDNWFNEKSELLAIKTNLPSSSSCASHATVNTEDDSNLTNNETISNFRIIHTDDLPEGIRPFKPEAQDSAHQKARSSYCCIQ.

Positions 7–79 (GDRLYDVLGV…KSHYDLYGDD (73 aa)) constitute a J domain. The segment at 146–240 (GKKLKFDLKR…CAGLGLLSKK (95 aa)) adopts a CR-type zinc-finger fold. 4 CXXCXGXG motif repeats span residues 159–166 (CIKCHGSG), 181–188 (CESCAGKG), 208–215 (CEKCNGKG), and 228–235 (CPDCAGLG).

The protein localises to the mitochondrion outer membrane. In Saccharomyces cerevisiae (strain ATCC 204508 / S288c) (Baker's yeast), this protein is DnaJ protein homolog XDJ1 (XDJ1).